The following is a 294-amino-acid chain: Probable 2-(5''-triphosphoribosyl)-3'-dephosphocoenzyme-A synthase (294 aa).

Belongs to the CitG/MdcB family.

The enzyme catalyses 3'-dephospho-CoA + ATP = 2'-(5''-triphospho-alpha-D-ribosyl)-3'-dephospho-CoA + adenine. The protein is Probable 2-(5''-triphosphoribosyl)-3'-dephosphocoenzyme-A synthase of Streptococcus pyogenes serotype M18 (strain MGAS8232).